The chain runs to 306 residues: Ornithine carbamoyltransferase (306 aa).

Carbamoyl phosphate contacts are provided by residues 53-56 (STRT), Gln80, Arg104, and 131-134 (HPCQ). L-ornithine contacts are provided by residues Asn162, Asp219, and 223 to 224 (SM). Residues 259–260 (CL) and Arg287 each bind carbamoyl phosphate.

Belongs to the aspartate/ornithine carbamoyltransferase superfamily. OTCase family.

The protein resides in the cytoplasm. The enzyme catalyses carbamoyl phosphate + L-ornithine = L-citrulline + phosphate + H(+). It participates in amino-acid biosynthesis; L-arginine biosynthesis; L-arginine from L-ornithine and carbamoyl phosphate: step 1/3. Its function is as follows. Reversibly catalyzes the transfer of the carbamoyl group from carbamoyl phosphate (CP) to the N(epsilon) atom of ornithine (ORN) to produce L-citrulline. The chain is Ornithine carbamoyltransferase from Psychrobacter sp. (strain PRwf-1).